The chain runs to 317 residues: Anamorsin homolog (317 aa).

The tract at residues 1–192 is N-terminal SAM-like domain; that stretch reads MREVLVVSES…ITGVRPNWKA (192 aa). A linker region spans residues 193 to 216; that stretch reads KGDRKSSSIHAAPIDGYISKAPDY. The [2Fe-2S] cluster site is built by Cys-219, Cys-226, Cys-229, and Cys-231. Residues 219–231 are fe-S binding site A; it reads CSTKPRACANCTC. Residues Cys-286, Cys-289, Cys-297, and Cys-300 each coordinate [4Fe-4S] cluster. 2 short sequence motifs (cx2C motif) span residues 286-289 and 297-300; these read CGNC and CDSC. The tract at residues 286–300 is fe-S binding site B; it reads CGNCYLGDAFRCDSC.

It belongs to the anamorsin family. In terms of assembly, monomer. The cofactor is [2Fe-2S] cluster. [4Fe-4S] cluster serves as cofactor.

The protein localises to the cytoplasm. Its subcellular location is the mitochondrion intermembrane space. In terms of biological role, component of the cytosolic iron-sulfur (Fe-S) protein assembly (CIA) machinery. Required for the maturation of extramitochondrial Fe-S proteins. Part of an electron transfer chain functioning in an early step of cytosolic Fe-S biogenesis, facilitating the de novo assembly of a [4Fe-4S] cluster on the cytosolic Fe-S scaffold complex. Electrons are transferred from NADPH via a FAD- and FMN-containing diflavin oxidoreductase. Together with the diflavin oxidoreductase, also required for the assembly of the diferric tyrosyl radical cofactor of ribonucleotide reductase (RNR), probably by providing electrons for reduction during radical cofactor maturation in the catalytic small subunit. This Theileria parva (East coast fever infection agent) protein is Anamorsin homolog.